A 150-amino-acid polypeptide reads, in one-letter code: UPF0178 protein PputGB1_5282 (150 aa).

It belongs to the UPF0178 family.

The polypeptide is UPF0178 protein PputGB1_5282 (Pseudomonas putida (strain GB-1)).